The primary structure comprises 349 residues: N-acetyltaurine hydrolase (349 aa).

A divalent metal cation-binding residues include H26, H28, E169, H201, H230, and D298.

This sequence belongs to the metallo-dependent hydrolases superfamily. Phosphotriesterase family. Requires a divalent metal cation as cofactor.

It is found in the cytoplasm. The protein resides in the cytosol. The enzyme catalyses N-acetyltaurine + H2O = taurine + acetate. It carries out the reaction N-propanoyltaurine + H2O = propanoate + taurine. The catalysed reaction is N-acetyl-L-methionine + H2O = L-methionine + acetate. It catalyses the reaction N-acetyl-L-isoleucine + H2O = L-isoleucine + acetate. The enzyme catalyses N-acetyl-L-leucine + H2O = L-leucine + acetate. It carries out the reaction N-acetyl-L-valine + H2O = L-valine + acetate. Its function is as follows. N-acetyltaurine hydrolase that catalyzes the hydrolysis of N-acetyltaurine into taurine and acetate. PTER also acts on other N-acetyl amino acids (Met, Ile, Leu, Val) and N-propionyltaurine, but at lower rates. In Danio rerio (Zebrafish), this protein is N-acetyltaurine hydrolase (pter).